Consider the following 254-residue polypeptide: Pyruvate dehydrogenase complex repressor (254 aa).

Positions Pro-9 to Ser-77 constitute an HTH gntR-type domain. Residues Glu-37–Gln-56 constitute a DNA-binding region (H-T-H motif).

Functionally, transcriptional repressor for the pyruvate dehydrogenase complex genes aceEF and lpd. The chain is Pyruvate dehydrogenase complex repressor (pdhR) from Escherichia coli O6:H1 (strain CFT073 / ATCC 700928 / UPEC).